The following is a 1154-amino-acid chain: Chromosome partition protein Smc (1154 aa).

Pro-32 to Asn-39 contacts ATP. Coiled-coil stretches lie at residues Val-170–Ala-215, Leu-282–Glu-505, and Ala-627–Glu-993.

Belongs to the SMC family. In terms of assembly, homodimer.

It localises to the cytoplasm. In terms of biological role, required for chromosome condensation and partitioning. In Rhodopseudomonas palustris (strain ATCC BAA-98 / CGA009), this protein is Chromosome partition protein Smc.